Consider the following 372-residue polypeptide: ATP phosphoribosyltransferase regulatory subunit (372 aa).

It belongs to the class-II aminoacyl-tRNA synthetase family. HisZ subfamily. In terms of assembly, heteromultimer composed of HisG and HisZ subunits.

The protein resides in the cytoplasm. It participates in amino-acid biosynthesis; L-histidine biosynthesis; L-histidine from 5-phospho-alpha-D-ribose 1-diphosphate: step 1/9. Its function is as follows. Required for the first step of histidine biosynthesis. May allow the feedback regulation of ATP phosphoribosyltransferase activity by histidine. This is ATP phosphoribosyltransferase regulatory subunit from Rhizobium rhizogenes (strain K84 / ATCC BAA-868) (Agrobacterium radiobacter).